The primary structure comprises 946 residues: Structure-specific endonuclease subunit SLX4 (946 aa).

Residues Met-1 to Ser-14 are compositionally biased toward pro residues. 7 disordered regions span residues Met-1–Asp-35, Gln-54–Val-119, Pro-147–Thr-318, Ala-339–Leu-399, Thr-416–Ile-471, Phe-577–Arg-748, and Ala-765–Ser-799. Positions Gln-54–Glu-74 are enriched in basic and acidic residues. Composition is skewed to basic residues over residues Lys-160–Ala-169 and Lys-182–Lys-195. Positions Ala-278–Pro-287 are enriched in basic and acidic residues. Residues Ser-453–Lys-469 show a composition bias toward basic residues. Residues Lys-627–Met-636 show a composition bias toward basic and acidic residues. The span at Lys-707 to Ser-717 shows a compositional bias: polar residues. The span at Lys-722–Lys-733 shows a compositional bias: basic and acidic residues.

This sequence belongs to the SLX4 family. In terms of assembly, forms a heterodimer with SLX1. Post-translationally, phosphorylated in response to DNA damage.

It localises to the nucleus. Functionally, regulatory subunit of the SLX1-SLX4 structure-specific endonuclease that resolves DNA secondary structures generated during DNA repair and recombination. Has endonuclease activity towards branched DNA substrates, introducing single-strand cuts in duplex DNA close to junctions with ss-DNA. This Phaeosphaeria nodorum (strain SN15 / ATCC MYA-4574 / FGSC 10173) (Glume blotch fungus) protein is Structure-specific endonuclease subunit SLX4.